Consider the following 29-residue polypeptide: Cytochrome b6-f complex subunit 8 (29 aa).

Residues 3–23 (IVSIAWAALMVVFTFSLSLVV) traverse the membrane as a helical segment.

The protein belongs to the PetN family. In terms of assembly, the 4 large subunits of the cytochrome b6-f complex are cytochrome b6, subunit IV (17 kDa polypeptide, PetD), cytochrome f and the Rieske protein, while the 4 small subunits are PetG, PetL, PetM and PetN. The complex functions as a dimer.

It localises to the plastid. The protein localises to the chloroplast thylakoid membrane. Its function is as follows. Component of the cytochrome b6-f complex, which mediates electron transfer between photosystem II (PSII) and photosystem I (PSI), cyclic electron flow around PSI, and state transitions. The sequence is that of Cytochrome b6-f complex subunit 8 from Angiopteris evecta (Mule's foot fern).